Reading from the N-terminus, the 261-residue chain is High-affinity zinc uptake system membrane protein ZnuB (261 aa).

A run of 7 helical transmembrane segments spans residues 5-27, 48-70, 85-107, 128-150, 172-194, 215-234, and 238-257; these read FFFGWLAGVLLTTITGPLGLFII, FAVLLNIHPFFMVIITILLFGML, ILGIIGYSFLSLGMIIINSISNF, IVILIISCVSILFVLVWYWDLML, ILIFLITLTIGIAIKFIGSLIAI, AFFSVIIGIISITWGILMSV, and LAISPTIVFCSSIVFVISNL.

This sequence belongs to the ABC-3 integral membrane protein family.

The protein localises to the cell membrane. In terms of biological role, involved in the high-affinity zinc uptake transport system. The protein is High-affinity zinc uptake system membrane protein ZnuB (znuB) of Buchnera aphidicola subsp. Baizongia pistaciae (strain Bp).